The primary structure comprises 112 residues: Thioredoxin-like protein YdfQ (112 aa).

A Thioredoxin domain is found at 1–107; that stretch reads MKEMTGLHSL…LEQKLKRVYR (107 aa). Cysteines 32 and 35 form a disulfide.

The sequence is that of Thioredoxin-like protein YdfQ (ydfQ) from Bacillus subtilis (strain 168).